The sequence spans 493 residues: L-arabinose isomerase 1 (493 aa).

The Mn(2+) site is built by Glu301, Glu326, His343, and His442.

Belongs to the arabinose isomerase family. It depends on Mn(2+) as a cofactor.

The enzyme catalyses beta-L-arabinopyranose = L-ribulose. The protein operates within carbohydrate degradation; L-arabinose degradation via L-ribulose; D-xylulose 5-phosphate from L-arabinose (bacterial route): step 1/3. Catalyzes the conversion of L-arabinose to L-ribulose. This is L-arabinose isomerase 1 from Bacillus licheniformis (strain ATCC 14580 / DSM 13 / JCM 2505 / CCUG 7422 / NBRC 12200 / NCIMB 9375 / NCTC 10341 / NRRL NRS-1264 / Gibson 46).